We begin with the raw amino-acid sequence, 143 residues long: Assembly factor CBP4 (143 aa).

Residues 5–27 (GFLRWGKVFAAGGSIILTGVLLF) traverse the membrane as a helical segment. The stretch at 99-131 (FQRLKADQVQKEELERIRQELDKIRMESLDQTD) forms a coiled coil.

This sequence belongs to the CBP4 family.

The protein resides in the mitochondrion inner membrane. Its function is as follows. Essential for the assembly of ubiquinol-cytochrome c reductase. It has a direct effect on the correct occurrence of the Rieske protein, core 4, core 5 and apocytochrome b. This Kluyveromyces lactis (strain ATCC 8585 / CBS 2359 / DSM 70799 / NBRC 1267 / NRRL Y-1140 / WM37) (Yeast) protein is Assembly factor CBP4 (CBP4).